Consider the following 364-residue polypeptide: Probable dual-specificity RNA methyltransferase RlmN (364 aa).

The active-site Proton acceptor is Glu-107. A Radical SAM core domain is found at 113 to 346 (HEYGNSVCVT…ATIRREQGSD (234 aa)). A disulfide bond links Cys-120 and Cys-351. Cys-127, Cys-131, and Cys-134 together coordinate [4Fe-4S] cluster. Residues 177 to 178 (GE), Ser-209, 232 to 234 (SLH), and Asn-308 each bind S-adenosyl-L-methionine. Cys-351 (S-methylcysteine intermediate) is an active-site residue.

It belongs to the radical SAM superfamily. RlmN family. [4Fe-4S] cluster serves as cofactor.

It localises to the cytoplasm. The catalysed reaction is adenosine(2503) in 23S rRNA + 2 reduced [2Fe-2S]-[ferredoxin] + 2 S-adenosyl-L-methionine = 2-methyladenosine(2503) in 23S rRNA + 5'-deoxyadenosine + L-methionine + 2 oxidized [2Fe-2S]-[ferredoxin] + S-adenosyl-L-homocysteine. The enzyme catalyses adenosine(37) in tRNA + 2 reduced [2Fe-2S]-[ferredoxin] + 2 S-adenosyl-L-methionine = 2-methyladenosine(37) in tRNA + 5'-deoxyadenosine + L-methionine + 2 oxidized [2Fe-2S]-[ferredoxin] + S-adenosyl-L-homocysteine. Functionally, specifically methylates position 2 of adenine 2503 in 23S rRNA and position 2 of adenine 37 in tRNAs. Confers resistance to some classes of antibiotics. The chain is Probable dual-specificity RNA methyltransferase RlmN from Staphylococcus epidermidis (strain ATCC 12228 / FDA PCI 1200).